Reading from the N-terminus, the 2475-residue chain is Polyprotein pp220 (2475 aa).

Residue G2 is the site of N-myristoyl glycine; by host attachment. The stretch at 2184–2211 (RNQIIGELNAFRTQLEDTLREVNNLVQT) forms a coiled coil.

Belongs to the asfivirus polyprotein pp220 family. Specific enzymatic cleavages in vivo by the viral pS273R protease yield mature proteins.

The protein resides in the host cytoplasm. It localises to the host perinuclear region. Its subcellular location is the virion. It is found in the host nucleus. Essential for the core assembly. Its myristoyl moiety may function as a membrane-anchoring signal to bind the developing core shell to the inner viral envelope. In terms of biological role, the structural protein p34 is a component of the virus core shell. Functionally, the structural protein p14 is a component of the virus core shell. Its function is as follows. The structural protein p37 is a component of the virus core shell. The structural protein p150 is a component of the virus core shell. This chain is Polyprotein pp220, found in African swine fever virus (isolate Tick/Malawi/Lil 20-1/1983) (ASFV).